A 948-amino-acid chain; its full sequence is ATPase 8, plasma membrane-type (948 aa).

Residues 1–64 lie on the Cytoplasmic side of the membrane; it reads MATEFSWDEI…EKSENKFLKF (64 aa). A helical membrane pass occupies residues 65–84; that stretch reads LGFMWNPLSWVMESAAIMAI. The Extracellular segment spans residues 85–96; it reads VLANGGGKAPDW. Residues 97–117 form a helical membrane-spanning segment; sequence QDFIGIMVLLIINSTISFIEE. Over 118 to 246 the chain is Cytoplasmic; it reads NNAGNAAAAL…GHFQKVLTSI (129 aa). A helical transmembrane segment spans residues 247-267; it reads GNFCICSIGLGMLIEILIMYP. Residues 268–276 lie on the Extracellular side of the membrane; the sequence is IQHRTYRDG. The chain crosses the membrane as a helical span at residues 277–294; it reads IDNLLVLLIGGIPIAMPT. Residues 295–646 lie on the Cytoplasmic side of the membrane; sequence VLSVTMAIGS…TSRAIFQRMK (352 aa). The active-site 4-aspartylphosphate intermediate is the aspartate 332. Mg(2+) is bound by residues aspartate 591 and aspartate 595. The helical transmembrane segment at 647–668 threads the bilayer; it reads NYTIYAVSITIRIVLGFMLVAL. Over 669-673 the chain is Extracellular; the sequence is IWRFD. Residues 674 to 696 form a helical membrane-spanning segment; that stretch reads FAPFMVLIIAILNDGTIMTISKD. The Cytoplasmic segment spans residues 697–712; the sequence is RVKPSPVPDSWKLNEI. A helical transmembrane segment spans residues 713 to 733; the sequence is FATGVVLGTYMALTTVLFFWL. Residues 734–754 are Extracellular-facing; that stretch reads AHDTDFFSKTFGVRSIQGNEE. A helical transmembrane segment spans residues 755 to 775; sequence ELMAALYLQVSIISQALIFVT. At 776–787 the chain is on the cytoplasmic side; it reads RSRSWSFVERPG. A helical transmembrane segment spans residues 788–808; that stretch reads FLLLIAFVIAQLVATLIAVYA. Topologically, residues 809–816 are extracellular; sequence NWGFARIV. Residues 817–837 traverse the membrane as a helical segment; it reads GCGWGWAGGIWVYSIITYIPL. Residues 838 to 948 lie on the Cytoplasmic side of the membrane; it reads DILKFIIRYA…IDTIQQHYTV (111 aa). Threonine 884 carries the post-translational modification Phosphothreonine. Serine 930 carries the post-translational modification Phosphoserine. The interval 946-948 is interaction with 14-3-3 proteins; the sequence is YTV. A Phosphothreonine modification is found at threonine 947.

This sequence belongs to the cation transport ATPase (P-type) (TC 3.A.3) family. Type IIIA subfamily. Binds to 14-3-3 proteins. The binding is induced by phosphorylation of Thr-947. Binding to 14-3-3 proteins activates the H(+)-ATPase. Expressed in guard cells, roots and leaves, and barely in mesophyll cells.

Its subcellular location is the membrane. It carries out the reaction ATP + H2O + H(+)(in) = ADP + phosphate + 2 H(+)(out). The plasma membrane H(+) ATPase of plants and fungi generates a proton gradient that drives the active transport of nutrients by H(+)-symport. The resulting external acidification and/or internal alkinization may mediate growth responses. This Arabidopsis thaliana (Mouse-ear cress) protein is ATPase 8, plasma membrane-type (AHA8).